The chain runs to 237 residues: Small ribosomal subunit protein eS4 (237 aa).

An S4 RNA-binding domain is found at 38–110 (LPLAVVVRDV…EAKYYDLKPI (73 aa)).

It belongs to the eukaryotic ribosomal protein eS4 family.

This Pyrobaculum calidifontis (strain DSM 21063 / JCM 11548 / VA1) protein is Small ribosomal subunit protein eS4.